The primary structure comprises 450 residues: tRNA-2-methylthio-N(6)-dimethylallyladenosine synthase (450 aa).

An MTTase N-terminal domain is found at 3-119; that stretch reads RRYYITTFGC…LGELLEQVWN (117 aa). [4Fe-4S] cluster contacts are provided by Cys12, Cys48, Cys82, Cys154, Cys158, and Cys161. Residues 140–377 enclose the Radical SAM core domain; it reads RDSTVTAWVN…NHLVAKIAGD (238 aa). The TRAM domain occupies 380–444; the sequence is QRYLGREEVV…AFSLSGVPLA (65 aa).

The protein belongs to the methylthiotransferase family. MiaB subfamily. Monomer. [4Fe-4S] cluster is required as a cofactor.

It is found in the cytoplasm. It carries out the reaction N(6)-dimethylallyladenosine(37) in tRNA + (sulfur carrier)-SH + AH2 + 2 S-adenosyl-L-methionine = 2-methylsulfanyl-N(6)-dimethylallyladenosine(37) in tRNA + (sulfur carrier)-H + 5'-deoxyadenosine + L-methionine + A + S-adenosyl-L-homocysteine + 2 H(+). Its function is as follows. Catalyzes the methylthiolation of N6-(dimethylallyl)adenosine (i(6)A), leading to the formation of 2-methylthio-N6-(dimethylallyl)adenosine (ms(2)i(6)A) at position 37 in tRNAs that read codons beginning with uridine. In Thermosynechococcus vestitus (strain NIES-2133 / IAM M-273 / BP-1), this protein is tRNA-2-methylthio-N(6)-dimethylallyladenosine synthase.